Here is a 289-residue protein sequence, read N- to C-terminus: Melatonin receptor type 1B (289 aa).

Topologically, residues 1–2 (GN) are cytoplasmic. The helical transmembrane segment at 3-23 (AFVVSLALADLVVALYPYPLV) threads the bilayer. At 24–41 (LLAIFHNGWTLGEMHCKV) the chain is on the extracellular side. A disulfide bridge links cysteine 39 with cysteine 116. The helical transmembrane segment at 42–62 (SGFVMGLSVIGSIFNITAIAI) threads the bilayer. The Cytoplasmic segment spans residues 63 to 81 (NRYCYICHSFAYDKVYSCW). The helical transmembrane segment at 82–102 (NTMLYVSLIWVLTVIATVPNF) threads the bilayer. Over 103–126 (FVGSLKYDPRIYSCTFVQTASSYY) the chain is Extracellular. The chain crosses the membrane as a helical span at residues 127–147 (TIAVVVIHFIVPITVVSFCYL). The Cytoplasmic portion of the chain corresponds to 148-179 (RIWVLVLQVRRRVKSETKPRLKPSDFRNFLTM). A helical membrane pass occupies residues 180–200 (FVVFVIFAFCWAPLNFIGLAV). Over 201-213 (AINPSEMAPKVPE) the chain is Extracellular. A helical membrane pass occupies residues 214 to 234 (WLFIISYFMAYFNSCLNAIIY). Residues 235 to 289 (GLLNQNFRNEYKRILMSLWMPRLFFQDTSKGGTDGQKSKPSPALNNNDQMKTDTL) are Cytoplasmic-facing. A disordered region spans residues 264 to 289 (KGGTDGQKSKPSPALNNNDQMKTDTL).

Belongs to the G-protein coupled receptor 1 family. In terms of tissue distribution, brain and kidney, with trace levels in lungs.

The protein localises to the cell membrane. In terms of biological role, high affinity receptor for melatonin. The activity of this receptor is mediated by pertussis toxin sensitive G proteins that inhibits adenylate cyclase activity. The sequence is that of Melatonin receptor type 1B from Gallus gallus (Chicken).